A 495-amino-acid polypeptide reads, in one-letter code: Probable polyamine transporter At1g31830 (495 aa).

11 consecutive transmembrane segments (helical) span residues 49–69 (VSMLPLVFLIFYEVSGGPFGV), 79–99 (LLALLGFVIFPFIWSIPEALI), 112–132 (GYVVWVSSALGPFWGFQQGWM), 156–176 (VPALGSGLPRVASILVLTILL), 186–206 (IVGWVAVLMGVFSILPFAVMG), 230–250 (LYLNTLFWNLNYWDSISTLAG), 267–287 (VILVACSYIFPLLAGIGAIPL), 357–377 (TPLLGILFSASGVVLLSWLSF), 380–400 (IVAAENLLYCVGMILEFIAFV), 417–437 (IGTTGSILMCIPPTILICAVV), and 442–462 (LKVAAVSIVMMIIGFLIHPLL).

The protein belongs to the amino acid-polyamine-organocation (APC) superfamily. Polyamine:cation symporter (PHS) (TC 2.A.3.12) family.

It is found in the cell membrane. In terms of biological role, probable cell membrane polyamine/proton symporter involved in the polyamine uptake in cells. The polypeptide is Probable polyamine transporter At1g31830 (Arabidopsis thaliana (Mouse-ear cress)).